The following is a 365-amino-acid chain: Glycerol dehydrogenase (365 aa).

Asp37, Gly94, Lys95, Thr116, and Ser119 together coordinate NAD(+). Asp121 contacts glycerol. Residues Ser125, Leu127, and Tyr131 each contribute to the NAD(+) site. Zn(2+)-binding residues include Asp171, His254, and His271. A glycerol-binding site is contributed by His254.

This sequence belongs to the iron-containing alcohol dehydrogenase family. The cofactor is Zn(2+).

It carries out the reaction glycerol + NAD(+) = dihydroxyacetone + NADH + H(+). It participates in polyol metabolism; glycerol fermentation; glycerone phosphate from glycerol (oxidative route): step 1/2. Catalyzes the NAD-dependent oxidation of glycerol to dihydroxyacetone (glycerone). Allows microorganisms to utilize glycerol as a source of carbon under anaerobic conditions. This chain is Glycerol dehydrogenase (gldA), found in Pseudomonas putida (Arthrobacter siderocapsulatus).